The primary structure comprises 86 residues: Haditoxin (86 aa).

Residues 1–21 (MKTLLLTLVVVTIVYLDLGYT) form the signal peptide. 4 disulfides stabilise this stretch: Cys-24–Cys-45, Cys-38–Cys-62, Cys-66–Cys-78, and Cys-79–Cys-84.

Belongs to the three-finger toxin family. Short-chain subfamily. Orphan group VIII (haditoxin) sub-subfamily. In terms of assembly, homodimer; non-covalently linked. In terms of tissue distribution, expressed by the venom gland.

The protein resides in the secreted. Its function is as follows. Antagonist of muscle (alpha-1-beta-1-delta-epsilon/CHRNA1-CHRNB1-CHRND-CHRNE) and neuronal (alpha-7/CHRNA7, alpha-3-beta-2/CHRNA3-CHRNB2, alpha-4-beta-2/CHRNA4-CHRNB2) nicotinic acetylcholine receptors (nAChR). The highest affinity is for human alpha-7/CHRNA7 nAChRs (IC(50)=180 nM), compared to human alpha-1-beta-1-delta-epsilon/CHRNA1-CHRNB1-CHRND-CHRNE nAChR (IC(50)= 550 nM), alpha-3-beta-2/CHRNA3-CHRNB2 nAChR (IC(50)=500 nM), and alpha-4-beta-2/CHRNA4-CHRNB2 nAChR (IC(50)=2.6 uM). The protein is Haditoxin of Ophiophagus hannah (King cobra).